Reading from the N-terminus, the 157-residue chain is 6,7-dimethyl-8-ribityllumazine synthase (157 aa).

5-amino-6-(D-ribitylamino)uracil-binding positions include F25, 59-61 (AME), and 83-85 (AII). Residue 88–89 (ST) coordinates (2S)-2-hydroxy-3-oxobutyl phosphate. H91 acts as the Proton donor in catalysis. Residue F116 participates in 5-amino-6-(D-ribitylamino)uracil binding. Residue R130 coordinates (2S)-2-hydroxy-3-oxobutyl phosphate.

The protein belongs to the DMRL synthase family.

The catalysed reaction is (2S)-2-hydroxy-3-oxobutyl phosphate + 5-amino-6-(D-ribitylamino)uracil = 6,7-dimethyl-8-(1-D-ribityl)lumazine + phosphate + 2 H2O + H(+). It functions in the pathway cofactor biosynthesis; riboflavin biosynthesis; riboflavin from 2-hydroxy-3-oxobutyl phosphate and 5-amino-6-(D-ribitylamino)uracil: step 1/2. Functionally, catalyzes the formation of 6,7-dimethyl-8-ribityllumazine by condensation of 5-amino-6-(D-ribitylamino)uracil with 3,4-dihydroxy-2-butanone 4-phosphate. This is the penultimate step in the biosynthesis of riboflavin. This is 6,7-dimethyl-8-ribityllumazine synthase from Lawsonia intracellularis (strain PHE/MN1-00).